Reading from the N-terminus, the 252-residue chain is 2-succinyl-6-hydroxy-2,4-cyclohexadiene-1-carboxylate synthase (252 aa).

This sequence belongs to the AB hydrolase superfamily. MenH family. In terms of assembly, monomer.

The catalysed reaction is 5-enolpyruvoyl-6-hydroxy-2-succinyl-cyclohex-3-ene-1-carboxylate = (1R,6R)-6-hydroxy-2-succinyl-cyclohexa-2,4-diene-1-carboxylate + pyruvate. The protein operates within quinol/quinone metabolism; 1,4-dihydroxy-2-naphthoate biosynthesis; 1,4-dihydroxy-2-naphthoate from chorismate: step 3/7. Its pathway is quinol/quinone metabolism; menaquinone biosynthesis. Catalyzes a proton abstraction reaction that results in 2,5-elimination of pyruvate from 2-succinyl-5-enolpyruvyl-6-hydroxy-3-cyclohexene-1-carboxylate (SEPHCHC) and the formation of 2-succinyl-6-hydroxy-2,4-cyclohexadiene-1-carboxylate (SHCHC). This chain is 2-succinyl-6-hydroxy-2,4-cyclohexadiene-1-carboxylate synthase, found in Shigella dysenteriae serotype 1 (strain Sd197).